Here is a 346-residue protein sequence, read N- to C-terminus: Uracil-DNA glycosylase (346 aa).

The disordered stretch occupies residues 1–105 (MSGKITDFFE…KLKNEEKSEE (105 aa)). Residues 20 to 29 (AENKDNDKEL) are compositionally biased toward basic and acidic residues. Residues 30-42 (TSTTTTTTTTSTT) are compositionally biased toward low complexity. Over residues 43 to 64 (SKKKVAAAPKKKAAVASKKRKH) the composition is skewed to basic residues. Positions 67–86 (SDEETDKEEQQNDDDDDGEE) are enriched in acidic residues. The Proton acceptor role is filled by Asp186.

Belongs to the uracil-DNA glycosylase (UDG) superfamily. UNG family.

The protein resides in the mitochondrion. It is found in the nucleus. The enzyme catalyses Hydrolyzes single-stranded DNA or mismatched double-stranded DNA and polynucleotides, releasing free uracil.. In terms of biological role, excises uracil residues from the DNA which can arise as a result of misincorporation of dUMP residues by DNA polymerase or due to deamination of cytosine. This is Uracil-DNA glycosylase (uglA) from Dictyostelium discoideum (Social amoeba).